We begin with the raw amino-acid sequence, 461 residues long: Alcaligin biosynthesis enzyme (461 aa).

An FAD-binding site is contributed by 9 to 15 (VAIGIGP).

It belongs to the lysine N(6)-hydroxylase/L-ornithine N(5)-oxygenase family. The cofactor is FAD.

It functions in the pathway siderophore biosynthesis; alcaligin biosynthesis. The polypeptide is Alcaligin biosynthesis enzyme (alcA) (Bordetella parapertussis (strain 12822 / ATCC BAA-587 / NCTC 13253)).